Consider the following 121-residue polypeptide: Large ribosomal subunit protein bL19 (121 aa).

Belongs to the bacterial ribosomal protein bL19 family.

Functionally, this protein is located at the 30S-50S ribosomal subunit interface and may play a role in the structure and function of the aminoacyl-tRNA binding site. This is Large ribosomal subunit protein bL19 from Neisseria meningitidis serogroup C (strain 053442).